A 579-amino-acid polypeptide reads, in one-letter code: Threonylcarbamoyladenosine tRNA methylthiotransferase (579 aa).

Ser53 carries the post-translational modification Phosphoserine. Positions 64–172 (QKIWIRTWGC…VVEVVEETIK (109 aa)) constitute an MTTase N-terminal domain. Residues Cys73 and Cys109 each contribute to the [4Fe-4S] cluster site. Ser122 bears the Phosphoserine mark. The [4Fe-4S] cluster site is built by Cys138, Cys214, Cys218, and Cys221. The Radical SAM core domain occupies 200 to 431 (RKNPLIEIIS…RVFHSYSPYD (232 aa)). The TRAM domain occupies 431 to 493 (DHKIGERQQV…KHFMKGQPVS (63 aa)). Thr499 bears the Phosphothreonine mark. The helical transmembrane segment at 556 to 578 (CALRMSVGLALLGLLFAFFVKVY) threads the bilayer.

Belongs to the methylthiotransferase family. CDKAL1 subfamily. The cofactor is [4Fe-4S] cluster. As to expression, expressed in pancreatic islets.

Its subcellular location is the endoplasmic reticulum membrane. The enzyme catalyses N(6)-L-threonylcarbamoyladenosine(37) in tRNA + (sulfur carrier)-SH + AH2 + 2 S-adenosyl-L-methionine = 2-methylsulfanyl-N(6)-L-threonylcarbamoyladenosine(37) in tRNA + (sulfur carrier)-H + 5'-deoxyadenosine + L-methionine + A + S-adenosyl-L-homocysteine + 2 H(+). Functionally, catalyzes the methylthiolation of N6-threonylcarbamoyladenosine (t(6)A), leading to the formation of 2-methylthio-N6-threonylcarbamoyladenosine (ms(2)t(6)A) at position 37 in tRNAs that read codons beginning with adenine. The polypeptide is Threonylcarbamoyladenosine tRNA methylthiotransferase (CDKAL1) (Homo sapiens (Human)).